A 156-amino-acid chain; its full sequence is Small ribosomal subunit protein uS7 (156 aa).

Belongs to the universal ribosomal protein uS7 family. Part of the 30S ribosomal subunit. Contacts proteins S9 and S11.

In terms of biological role, one of the primary rRNA binding proteins, it binds directly to 16S rRNA where it nucleates assembly of the head domain of the 30S subunit. Is located at the subunit interface close to the decoding center, probably blocks exit of the E-site tRNA. In Geotalea daltonii (strain DSM 22248 / JCM 15807 / FRC-32) (Geobacter daltonii), this protein is Small ribosomal subunit protein uS7.